A 284-amino-acid chain; its full sequence is 2-dehydro-3-deoxyphosphooctonate aldolase (284 aa).

The protein belongs to the KdsA family.

The protein resides in the cytoplasm. The catalysed reaction is D-arabinose 5-phosphate + phosphoenolpyruvate + H2O = 3-deoxy-alpha-D-manno-2-octulosonate-8-phosphate + phosphate. Its pathway is carbohydrate biosynthesis; 3-deoxy-D-manno-octulosonate biosynthesis; 3-deoxy-D-manno-octulosonate from D-ribulose 5-phosphate: step 2/3. The protein operates within bacterial outer membrane biogenesis; lipopolysaccharide biosynthesis. This Erwinia tasmaniensis (strain DSM 17950 / CFBP 7177 / CIP 109463 / NCPPB 4357 / Et1/99) protein is 2-dehydro-3-deoxyphosphooctonate aldolase.